The following is an 80-amino-acid chain: UPF0180 protein BPUM_1317 (80 aa).

The protein belongs to the UPF0180 family.

This is UPF0180 protein BPUM_1317 from Bacillus pumilus (strain SAFR-032).